The chain runs to 126 residues: Flagellar assembly factor FliW (126 aa).

Belongs to the FliW family. Interacts with translational regulator CsrA and flagellin(s).

It localises to the cytoplasm. Acts as an anti-CsrA protein, binds CsrA and prevents it from repressing translation of its target genes, one of which is flagellin. Binds to flagellin and participates in the assembly of the flagellum. The chain is Flagellar assembly factor FliW from Sulfurimonas denitrificans (strain ATCC 33889 / DSM 1251) (Thiomicrospira denitrificans (strain ATCC 33889 / DSM 1251)).